The following is a 437-amino-acid chain: Trigger factor (437 aa).

Positions 165–251 constitute a PPIase FKBP-type domain; sequence GDLVVIDFKG…LHTIKEKEKI (87 aa).

The protein belongs to the FKBP-type PPIase family. Tig subfamily.

Its subcellular location is the cytoplasm. It carries out the reaction [protein]-peptidylproline (omega=180) = [protein]-peptidylproline (omega=0). Its function is as follows. Involved in protein export. Acts as a chaperone by maintaining the newly synthesized protein in an open conformation. Functions as a peptidyl-prolyl cis-trans isomerase. This chain is Trigger factor, found in Nitratiruptor sp. (strain SB155-2).